A 324-amino-acid polypeptide reads, in one-letter code: Probable UDP-sugar transporter protein SLC35A4 (324 aa).

The Cytoplasmic segment spans residues Met1–Arg18. Residues Trp19–Leu39 traverse the membrane as a helical segment. Topologically, residues Cys40–Ser52 are lumenal. Residues Ala53–Trp73 traverse the membrane as a helical segment. The Cytoplasmic segment spans residues Gln74 to Gln85. A helical transmembrane segment spans residues Ala86–Leu106. Residues Gln107–Gln142 are Lumenal-facing. Residues Gly143–Glu163 traverse the membrane as a helical segment. At Pro164–Met180 the chain is on the cytoplasmic side. Residues Pro181–Leu201 form a helical membrane-spanning segment. The Lumenal portion of the chain corresponds to Ser202 to Arg214. The helical transmembrane segment at Leu215–Leu235 threads the bilayer. Topologically, residues Tyr236–Gly248 are cytoplasmic. A helical membrane pass occupies residues Phe249 to Met271. The Lumenal portion of the chain corresponds to Lys272–Arg279. The chain crosses the membrane as a helical span at residues Leu280–Leu300. The Cytoplasmic segment spans residues Gln301 to Pro324.

This sequence belongs to the nucleotide-sugar transporter family. SLC35A subfamily. Found in a complex with SLC35A2 and SLC35A3.

The protein resides in the golgi apparatus membrane. It carries out the reaction CDP-L-ribitol(in) + CDP(out) = CDP-L-ribitol(out) + CDP(in). Mediates the transport of CDP-ribitol. Does not exhibit CMP-sialic acid, UDP-galactose and UDP-N-acetylglucosamine transport activity. The polypeptide is Probable UDP-sugar transporter protein SLC35A4 (Mus musculus (Mouse)).